Consider the following 459-residue polypeptide: Argininosuccinate lyase (459 aa).

This sequence belongs to the lyase 1 family. Argininosuccinate lyase subfamily.

The protein resides in the cytoplasm. The catalysed reaction is 2-(N(omega)-L-arginino)succinate = fumarate + L-arginine. The protein operates within amino-acid biosynthesis; L-arginine biosynthesis; L-arginine from L-ornithine and carbamoyl phosphate: step 3/3. The protein is Argininosuccinate lyase of Bacillus licheniformis (strain ATCC 14580 / DSM 13 / JCM 2505 / CCUG 7422 / NBRC 12200 / NCIMB 9375 / NCTC 10341 / NRRL NRS-1264 / Gibson 46).